The following is a 295-amino-acid chain: Cutinase 11 (295 aa).

Residues Met1–Ala17 form the signal peptide. A disulfide bridge connects residues Cys25 and Cys102. Residues Ser113, Asp198, and His210 contribute to the active site. A disulfide bond links Cys184 and Cys202. Residues Lys228–Ser258 are disordered. The span at Pro236–Ser258 shows a compositional bias: pro residues. The region spanning Ser260–Leu295 is the CBM1 domain.

It belongs to the cutinase family. In terms of processing, the 2 disulfide bonds play a critical role in holding the catalytic residues in juxta-position; reduction of the disulfide bridges results in the complete inactivation of the enzyme.

The protein localises to the secreted. It carries out the reaction cutin + H2O = cutin monomers.. Functionally, catalyzes the hydrolysis of complex carboxylic polyesters found in the cell wall of plants. May degrade cutin, a macromolecule that forms the structure of the plant cuticle. May also degrade suberin, a specialized macromolecule found in the cell wall of various plant tissues. Allows pathogenic fungi to penetrate through the cuticular barrier into the host plant during the initial stage of fungal infection. Involved in pathogenesis. This is Cutinase 11 from Verticillium dahliae (Verticillium wilt).